A 156-amino-acid chain; its full sequence is UPF0178 protein Jann_2168 (156 aa).

The protein belongs to the UPF0178 family.

This is UPF0178 protein Jann_2168 from Jannaschia sp. (strain CCS1).